A 506-amino-acid chain; its full sequence is 7,8-dihydro-6-hydroxymethylpterin dimethyltransferase (506 aa).

Cys73, Cys77, Cys80, Cys98, Cys102, and Cys105 together coordinate [4Fe-4S] cluster. Residues 82–300 (NHKSTTILAN…FIKLVEEQTD (219 aa)) form the Radical SAM core domain.

The protein belongs to the radical SAM superfamily. [4Fe-4S] cluster serves as cofactor. Requires S-adenosyl-L-methionine as cofactor.

It functions in the pathway cofactor biosynthesis; 5,6,7,8-tetrahydromethanopterin biosynthesis. In terms of biological role, is responsible for the addition of methyl groups at C-7 and C-9 of the pterin ring during methanopterin (MPT) biosynthesis. Catalyzes methylation of 7,8-dihydro-6-hydroxymethylpterin, likely using methylenetetrahydromethanopterin as a methyl group donor, via a radical-based mechanism. This is 7,8-dihydro-6-hydroxymethylpterin dimethyltransferase from Methanocaldococcus jannaschii (strain ATCC 43067 / DSM 2661 / JAL-1 / JCM 10045 / NBRC 100440) (Methanococcus jannaschii).